Here is a 441-residue protein sequence, read N- to C-terminus: Capsid vertex component 1 (441 aa).

It belongs to the herpesviridae CVC1 protein family. As to quaternary structure, interacts (via C-terminus) with capsid vertex component 2/CVC2.

It is found in the virion. It localises to the host nucleus. Functionally, capsid vertex-specific component that plays a role during viral DNA encapsidation, assuring correct genome cleavage and presumably stabilizing capsids that contain full-length viral genomes. The polypeptide is Capsid vertex component 1 (Saimiriine herpesvirus 2 (strain 11) (SaHV-2)).